The chain runs to 496 residues: Xylulose kinase (496 aa).

83–84 (MH) contributes to the substrate binding site. Asp-237 serves as the catalytic Proton acceptor.

It belongs to the FGGY kinase family.

It catalyses the reaction D-xylulose + ATP = D-xylulose 5-phosphate + ADP + H(+). Functionally, catalyzes the phosphorylation of D-xylulose to D-xylulose 5-phosphate. This is Xylulose kinase from Staphylococcus epidermidis (strain ATCC 35984 / DSM 28319 / BCRC 17069 / CCUG 31568 / BM 3577 / RP62A).